Consider the following 289-residue polypeptide: Purine nucleoside phosphorylase (289 aa).

Met1 is modified (N-acetylmethionine). Residues Ser33, His64, and 84–86 (RFH) contribute to the phosphate site. Tyr88 contacts a purine D-ribonucleoside. Phosphate is bound at residue Ala116. Glu201 and Met219 together coordinate a purine D-ribonucleoside. Ser220 provides a ligand contact to phosphate. Asn243 provides a ligand contact to a purine D-ribonucleoside. The residue at position 251 (Ser251) is a Phosphoserine. Residue His257 coordinates a purine D-ribonucleoside.

This sequence belongs to the PNP/MTAP phosphorylase family. Homotrimer.

It localises to the cytoplasm. It catalyses the reaction inosine + phosphate = alpha-D-ribose 1-phosphate + hypoxanthine. The enzyme catalyses guanosine + phosphate = alpha-D-ribose 1-phosphate + guanine. The catalysed reaction is 2'-deoxyguanosine + phosphate = 2-deoxy-alpha-D-ribose 1-phosphate + guanine. It carries out the reaction 2'-deoxyinosine + phosphate = 2-deoxy-alpha-D-ribose 1-phosphate + hypoxanthine. It functions in the pathway purine metabolism; purine nucleoside salvage. Its function is as follows. Catalyzes the phosphorolytic breakdown of the N-glycosidic bond in the beta-(deoxy)ribonucleoside molecules, with the formation of the corresponding free purine bases and pentose-1-phosphate. Preferentially acts on 6-oxopurine nucleosides including inosine and guanosine. This chain is Purine nucleoside phosphorylase (PNP), found in Bos taurus (Bovine).